Consider the following 209-residue polypeptide: Thymidine kinase (209 aa).

ATP is bound by residues 9 to 16 (SAMNAGKT) and 88 to 91 (DEAQ). Glu-89 (proton acceptor) is an active-site residue.

This sequence belongs to the thymidine kinase family. Homotetramer.

It is found in the cytoplasm. The catalysed reaction is thymidine + ATP = dTMP + ADP + H(+). This chain is Thymidine kinase, found in Xanthomonas axonopodis pv. citri (strain 306).